We begin with the raw amino-acid sequence, 565 residues long: CTP synthase (565 aa).

The tract at residues 1–272 is amidoligase domain; that stretch reads MARPKNVKHI…DLRVMKKLGL (272 aa). A CTP-binding site is contributed by Ser18. Residue Ser18 participates in UTP binding. ATP is bound at residue 19–24; the sequence is SLGKGI. Residue Tyr59 coordinates L-glutamine. Asp76 contributes to the ATP binding site. Asp76 and Glu146 together coordinate Mg(2+). CTP-binding positions include 153–155, 193–198, and Lys229; these read DIE and KTKPTQ. Residues 193–198 and Lys229 each bind UTP; that span reads KTKPTQ. Residues 299–543 enclose the Glutamine amidotransferase type-1 domain; that stretch reads TIGICGKYTE…VHAAKEFAQG (245 aa). L-glutamine is bound at residue Gly363. Residue Cys390 is the Nucleophile; for glutamine hydrolysis of the active site. L-glutamine-binding positions include 391 to 394, Glu414, and Arg471; that span reads LGMQ. Residues His516 and Glu518 contribute to the active site.

This sequence belongs to the CTP synthase family. As to quaternary structure, homotetramer.

It carries out the reaction UTP + L-glutamine + ATP + H2O = CTP + L-glutamate + ADP + phosphate + 2 H(+). It catalyses the reaction L-glutamine + H2O = L-glutamate + NH4(+). The catalysed reaction is UTP + NH4(+) + ATP = CTP + ADP + phosphate + 2 H(+). The protein operates within pyrimidine metabolism; CTP biosynthesis via de novo pathway; CTP from UDP: step 2/2. With respect to regulation, allosterically activated by GTP, when glutamine is the substrate; GTP has no effect on the reaction when ammonia is the substrate. The allosteric effector GTP functions by stabilizing the protein conformation that binds the tetrahedral intermediate(s) formed during glutamine hydrolysis. Inhibited by the product CTP, via allosteric rather than competitive inhibition. Its function is as follows. Catalyzes the ATP-dependent amination of UTP to CTP with either L-glutamine or ammonia as the source of nitrogen. Regulates intracellular CTP levels through interactions with the four ribonucleotide triphosphates. The protein is CTP synthase of Chlorobaculum tepidum (strain ATCC 49652 / DSM 12025 / NBRC 103806 / TLS) (Chlorobium tepidum).